Reading from the N-terminus, the 396-residue chain is uncharacterized protein (396 aa).

2 helical membrane-spanning segments follow: residues 27–47 and 69–89; these read LLIA…QICL and FIVL…NVTF. An HXXXXD motif motif is present at residues 117–122; sequence HQMYAD. 2 consecutive transmembrane segments (helical) span residues 123-143 and 372-392; these read WIYL…YIIL and LTPR…VFVM.

Belongs to the 1-acyl-sn-glycerol-3-phosphate acyltransferase family.

It is found in the membrane. This is an uncharacterized protein from Saccharomyces cerevisiae (strain ATCC 204508 / S288c) (Baker's yeast).